We begin with the raw amino-acid sequence, 244 residues long: MSTGISSDLHLHPRALNFSKTSKSGLSNRKVSFSSVGYAQNRKLSCSVSSTENVAPKDDDRGKDRPLVKMCGITSARDAAMAVEAGADFIGMIIWPHSKRSISLSVAKDISQVAREGGAKPVGVFVEDDENTILRAADSSDLELVQLHGNSSRAAFSRLVRERKVIYVLNANEDGKLLNVVPEEDGHLADWILVDSATGGRYLDQLLSFFALSHCNVFLRGTSYTITLVHETVCLSQVTEISRV.

A chloroplast-targeting transit peptide spans 1-32 (MSTGISSDLHLHPRALNFSKTSKSGLSNRKVS).

Belongs to the TrpF family.

It localises to the plastid. The protein localises to the chloroplast. It catalyses the reaction N-(5-phospho-beta-D-ribosyl)anthranilate = 1-(2-carboxyphenylamino)-1-deoxy-D-ribulose 5-phosphate. It participates in amino-acid biosynthesis; L-tryptophan biosynthesis; L-tryptophan from chorismate: step 3/5. In Arabidopsis thaliana (Mouse-ear cress), this protein is N-(5'-phosphoribosyl)anthranilate isomerase 3, chloroplastic (PAI3).